Consider the following 250-residue polypeptide: tRNA (guanine-N(1)-)-methyltransferase (250 aa).

S-adenosyl-L-methionine-binding positions include glycine 116 and 136–141 (IGDYVL).

The protein belongs to the RNA methyltransferase TrmD family. Homodimer.

It localises to the cytoplasm. It carries out the reaction guanosine(37) in tRNA + S-adenosyl-L-methionine = N(1)-methylguanosine(37) in tRNA + S-adenosyl-L-homocysteine + H(+). In terms of biological role, specifically methylates guanosine-37 in various tRNAs. The polypeptide is tRNA (guanine-N(1)-)-methyltransferase (Pseudomonas putida (strain ATCC 700007 / DSM 6899 / JCM 31910 / BCRC 17059 / LMG 24140 / F1)).